A 196-amino-acid chain; its full sequence is Thymidine kinase (196 aa).

Residues 9–16 (SAMNAGKS) and 88–91 (DEAQ) each bind ATP. Catalysis depends on glutamate 89, which acts as the Proton acceptor. 4 residues coordinate Zn(2+): cysteine 146, cysteine 148, cysteine 183, and histidine 186.

It belongs to the thymidine kinase family. As to quaternary structure, homotetramer.

The protein localises to the cytoplasm. The catalysed reaction is thymidine + ATP = dTMP + ADP + H(+). The protein is Thymidine kinase of Coxiella burnetii (strain RSA 493 / Nine Mile phase I).